The chain runs to 346 residues: Inositol 2-dehydrogenase/D-chiro-inositol 3-dehydrogenase (346 aa).

The protein belongs to the Gfo/Idh/MocA family. In terms of assembly, homotetramer.

It catalyses the reaction myo-inositol + NAD(+) = scyllo-inosose + NADH + H(+). It carries out the reaction 1D-chiro-inositol + NAD(+) = scyllo-inosine + NADH + H(+). It participates in polyol metabolism; myo-inositol degradation into acetyl-CoA; acetyl-CoA from myo-inositol: step 1/7. Involved in the oxidation of myo-inositol (MI) and D-chiro-inositol (DCI) to 2-keto-myo-inositol (2KMI or 2-inosose) and 1-keto-D-chiro-inositol (1KDCI), respectively. The protein is Inositol 2-dehydrogenase/D-chiro-inositol 3-dehydrogenase of Lacticaseibacillus casei (Lactobacillus casei).